The sequence spans 736 residues: RNA-binding protein RMD9-like, mitochondrial (736 aa).

3 disordered regions span residues 1–28 (MFRF…KTNS), 124–148 (PRRS…HPNT), and 566–618 (NRGI…GTPV). A mitochondrion-targeting transit peptide spans 1–79 (MFRFAQPANV…HFKNQFSSRN (79 aa)). Low complexity predominate over residues 125–140 (RRSNMRNNGNNNMNNG). Positions 566 to 578 (NRGISSSSPMSAV) are enriched in polar residues. Low complexity predominate over residues 579–596 (NSLAPSTTNTPSPSLSPI). Residues 602–613 (LSSARNTPNKIW) show a composition bias toward polar residues.

This sequence belongs to the RMD9 family. Monomer. Post-translationally, phosphorylated. Phosphorylation promotes binding to RNA.

It localises to the mitochondrion inner membrane. May be involved in the processing or stability of mitochondrial mRNAs. The chain is RNA-binding protein RMD9-like, mitochondrial from Candida glabrata (strain ATCC 2001 / BCRC 20586 / JCM 3761 / NBRC 0622 / NRRL Y-65 / CBS 138) (Yeast).